The primary structure comprises 370 residues: Histidinol-phosphate aminotransferase 1 (370 aa).

K222 carries the post-translational modification N6-(pyridoxal phosphate)lysine.

Belongs to the class-II pyridoxal-phosphate-dependent aminotransferase family. Histidinol-phosphate aminotransferase subfamily. Homodimer. Pyridoxal 5'-phosphate serves as cofactor.

The catalysed reaction is L-histidinol phosphate + 2-oxoglutarate = 3-(imidazol-4-yl)-2-oxopropyl phosphate + L-glutamate. Its pathway is amino-acid biosynthesis; L-histidine biosynthesis; L-histidine from 5-phospho-alpha-D-ribose 1-diphosphate: step 7/9. This chain is Histidinol-phosphate aminotransferase 1, found in Bacillus cereus (strain ZK / E33L).